The sequence spans 494 residues: 4-trimethylaminobutyraldehyde dehydrogenase (494 aa).

Position 2 is an N-acetylserine; in 4-trimethylaminobutyraldehyde dehydrogenase, N-terminally processed (S2). K30 bears the N6-acetyllysine; alternate mark. N6-succinyllysine; alternate is present on K30. K59 carries the N6-succinyllysine modification. Residues K180 and G232 to T236 contribute to the NAD(+) site. The active-site Proton acceptor is the E254. Residue C288 is the Nucleophile of the active site. Residue K298 is modified to N6-acetyllysine. K303 is subject to N6-acetyllysine; alternate. K303 bears the N6-succinyllysine; alternate mark. K344 is subject to N6-acetyllysine. E391 lines the NAD(+) pocket.

It belongs to the aldehyde dehydrogenase family. Homotetramer. Detected in brain (at protein level). High expression in adult liver, skeletal muscle, and kidney. Low levels in heart, pancreas, lung and brain. Expressed in all regions of the brain. Expression levels are variable in the different brain areas, with the highest levels in the spinal cord and the lowest in the occipital pole.

Its subcellular location is the cytoplasm. It localises to the cytosol. The enzyme catalyses 4-(trimethylamino)butanal + NAD(+) + H2O = 4-(trimethylamino)butanoate + NADH + 2 H(+). It carries out the reaction an aldehyde + NAD(+) + H2O = a carboxylate + NADH + 2 H(+). The catalysed reaction is 4-aminobutanal + NAD(+) + H2O = 4-aminobutanoate + NADH + 2 H(+). It catalyses the reaction formaldehyde + NAD(+) + H2O = formate + NADH + 2 H(+). The enzyme catalyses acetaldehyde + NAD(+) + H2O = acetate + NADH + 2 H(+). It carries out the reaction imidazole-4-acetaldehyde + NAD(+) + H2O = imidazole-4-acetate + NADH + 2 H(+). The catalysed reaction is acrolein + NAD(+) + H2O = acrylate + NADH + 2 H(+). It catalyses the reaction (5-hydroxyindol-3-yl)acetaldehyde + NAD(+) + H2O = (5-hydroxyindol-3-yl)acetate + NADH + 2 H(+). The enzyme catalyses 3,4-dihydroxyphenylacetaldehyde + NAD(+) + H2O = 3,4-dihydroxyphenylacetate + NADH + 2 H(+). It carries out the reaction spermine monoaldehyde + NAD(+) + H2O = N-(2-carboxyethyl)spermidine + NADH + 2 H(+). The catalysed reaction is propanal + NAD(+) + H2O = propanoate + NADH + 2 H(+). It catalyses the reaction butanal + NAD(+) + H2O = butanoate + NADH + 2 H(+). The enzyme catalyses pentanal + NAD(+) + H2O = pentanoate + NADH + 2 H(+). It carries out the reaction hexanal + NAD(+) + H2O = hexanoate + NADH + 2 H(+). The protein operates within amine and polyamine biosynthesis; carnitine biosynthesis. Its function is as follows. Converts gamma-trimethylaminobutyraldehyde into gamma-butyrobetaine with high efficiency (in vitro). Can catalyze the irreversible oxidation of a broad range of aldehydes to the corresponding acids in an NAD-dependent reaction, but with low efficiency. Catalyzes the oxidation of aldehydes arising from biogenic amines and polyamines. This is 4-trimethylaminobutyraldehyde dehydrogenase (ALDH9A1) from Homo sapiens (Human).